A 445-amino-acid polypeptide reads, in one-letter code: Lipoyl synthase, mitochondrial (445 aa).

A mitochondrion-targeting transit peptide spans 1–40; it reads MRPGSWRVITHYGFTGPIQRLQAPLRRSLARAAALSTRSY. A compositionally biased stretch (low complexity) spans 42–71; that stretch reads TIPSAPSSQPTSQESSPAASASASASAPAT. Residues 42-77 are disordered; that stretch reads TIPSAPSSQPTSQESSPAASASASASAPATKPRPTY. The [4Fe-4S] cluster site is built by Cys-157, Cys-162, Cys-168, Cys-188, Cys-192, Cys-195, and Ser-405. The region spanning 171–394 is the Radical SAM core domain; it reads GSNKAAATAT…RQRALDMGFL (224 aa).

This sequence belongs to the radical SAM superfamily. Lipoyl synthase family. [4Fe-4S] cluster is required as a cofactor.

It is found in the mitochondrion. It catalyses the reaction [[Fe-S] cluster scaffold protein carrying a second [4Fe-4S](2+) cluster] + N(6)-octanoyl-L-lysyl-[protein] + 2 oxidized [2Fe-2S]-[ferredoxin] + 2 S-adenosyl-L-methionine + 4 H(+) = [[Fe-S] cluster scaffold protein] + N(6)-[(R)-dihydrolipoyl]-L-lysyl-[protein] + 4 Fe(3+) + 2 hydrogen sulfide + 2 5'-deoxyadenosine + 2 L-methionine + 2 reduced [2Fe-2S]-[ferredoxin]. It participates in protein modification; protein lipoylation via endogenous pathway; protein N(6)-(lipoyl)lysine from octanoyl-[acyl-carrier-protein]: step 2/2. Its function is as follows. Catalyzes the radical-mediated insertion of two sulfur atoms into the C-6 and C-8 positions of the octanoyl moiety bound to the lipoyl domains of lipoate-dependent enzymes, thereby converting the octanoylated domains into lipoylated derivatives. This Sordaria macrospora (strain ATCC MYA-333 / DSM 997 / K(L3346) / K-hell) protein is Lipoyl synthase, mitochondrial.